We begin with the raw amino-acid sequence, 1093 residues long: Isomaltosyltransferase (1093 aa).

A signal peptide spans 1-29 (MYVRNLTGSFRFSLSFLLCFCLFVPSIYA). Asp566 acts as the Nucleophile in catalysis. Glu569 is an active-site residue. Residue Asp631 is the Proton donor of the active site. The region spanning 968 to 1091 (VEYEAEFGVQ…GINFDNIAIV (124 aa)) is the CBM6 domain.

This sequence belongs to the glycosyl hydrolase 31 family.

Its subcellular location is the secreted. The catalysed reaction is 2 alpha-isomaltosyl-(1-&gt;4)-D-maltotriose = alpha-isomaltosyl-(1-&gt;3)-alpha-isomaltosyl-(1-&gt;4)-D-maltotriose + D-maltotriose. The enzyme catalyses alpha-isomaltosyl-(1-&gt;3)-alpha-isomaltosyl-(1-&gt;4)-D-maltotriose = cyclobis-(1-&gt;3)-alpha-D-isomaltosyl + D-maltotriose. With respect to regulation, strongly inhibited by Hg(2+) and moderately inhibited by Cu(2+) and Pb(2+). Other metal ions, Tris and EDTA have almost no effects. Glycosyltransferase involved, together with CtsZ, in the conversion of alpha-1,4-glucan into a cyclic tetrasaccharide (CTS) constructed from four alpha-glucopyranosyl residues. Catalyzes the alpha-(1-&gt;3) transfer of the isomaltosyl moiety of alpha-isomaltosyl-(1-&gt;4)-D-maltotriose to another alpha-isomaltosyl-(1-&gt;4)-D-maltotriose, resulting in alpha-isomaltosyl-(1-&gt;3)-alpha-isomaltosyl-alpha-(1-&gt;4)-maltotriose formation. In addition, the enzyme catalyzes the intramolecular cyclization of the product, generating the cyclic tetrasaccharide cyclobis-(1-&gt;6)-alpha-nigerosyl. The protein is Isomaltosyltransferase of Sporosarcina globispora (Bacillus globisporus).